The sequence spans 359 residues: POU domain, class 5, transcription factor 1B (359 aa).

2 disordered regions span residues 1 to 53 (MAGH…GVGP) and 87 to 116 (QGGL…EPCT). Position 111 is a phosphoserine (Ser-111). A POU-specific domain is found at 138-212 (DIKALQKELE…LLQKWVEEAD (75 aa)). Residues 229–288 (ARKRKRTSIENRVRGNLENLFLQCPKPTLQISHIAQQLGLEKDVVRVWFCNRRQKGKRSS) constitute a DNA-binding region (homeobox). The residue at position 235 (Thr-235) is a Phosphothreonine. 3 positions are modified to phosphoserine: Ser-236, Ser-288, and Ser-289. The segment at 287-322 (SSSDYAQREDFEAAGSPFSGGPVSFPPAPGPHFGTP) is disordered. Residues 299 to 309 (AAGSPFSGGPV) show a composition bias toward low complexity. Ser-354 carries the post-translational modification Phosphoserine.

The protein belongs to the POU transcription factor family. Class-5 subfamily. Detected in epithelial cells of the prostate (at protein level). Detected at the mRNA level in several cancer tissues (breast, uterine cervix, lung, thyroid gland, esophagus, colon, urinary bladder, and glioma).

It is found in the nucleus. The protein localises to the cytoplasm. Its function is as follows. Shows weak transcriptional activator activity. The polypeptide is POU domain, class 5, transcription factor 1B (POU5F1B) (Homo sapiens (Human)).